Consider the following 122-residue polypeptide: Small ribosomal subunit protein uS13 (122 aa).

The tract at residues 95–122 (GLPVHGQRTKTNARTRKGPARTVAGKKK) is disordered.

Belongs to the universal ribosomal protein uS13 family. Part of the 30S ribosomal subunit. Forms a loose heterodimer with protein S19. Forms two bridges to the 50S subunit in the 70S ribosome.

Its function is as follows. Located at the top of the head of the 30S subunit, it contacts several helices of the 16S rRNA. In the 70S ribosome it contacts the 23S rRNA (bridge B1a) and protein L5 of the 50S subunit (bridge B1b), connecting the 2 subunits; these bridges are implicated in subunit movement. Contacts the tRNAs in the A and P-sites. This Geotalea uraniireducens (strain Rf4) (Geobacter uraniireducens) protein is Small ribosomal subunit protein uS13.